The chain runs to 35 residues: Thaumatin-like protein 6 (35 aa).

The protein belongs to the thaumatin family.

The protein is Thaumatin-like protein 6 of Glebionis coronaria (Crown daisy).